A 427-amino-acid polypeptide reads, in one-letter code: Anaerobic glycerol-3-phosphate dehydrogenase subunit B (427 aa).

The protein belongs to the anaerobic G-3-P dehydrogenase subunit B family. In terms of assembly, composed of a catalytic GlpA/B dimer and of membrane bound GlpC. The cofactor is FMN.

It carries out the reaction a quinone + sn-glycerol 3-phosphate = dihydroxyacetone phosphate + a quinol. The protein operates within polyol metabolism; glycerol degradation via glycerol kinase pathway; glycerone phosphate from sn-glycerol 3-phosphate (anaerobic route): step 1/1. In terms of biological role, conversion of glycerol 3-phosphate to dihydroxyacetone. Uses fumarate or nitrate as electron acceptor. This is Anaerobic glycerol-3-phosphate dehydrogenase subunit B from Glaesserella parasuis serovar 5 (strain SH0165) (Haemophilus parasuis).